The following is a 521-amino-acid chain: Outer membrane protein assembly factor BamB (521 aa).

Positions 1 to 19 (MKKLFLVIVPLLLSLLATS) are cleaved as a signal peptide. A lipid anchor (N-palmitoyl cysteine) is attached at Cys-20. Cys-20 carries the S-diacylglycerol cysteine lipid modification. A disordered region spans residues 418-521 (KSGSIESSPK…IGDFSKGDSD (104 aa)). The span at 429–444 (LPDKKVDSNKTSKNDT) shows a compositional bias: basic and acidic residues. Polar residues predominate over residues 445 to 477 (DSNPATTATSTKDIQNPANQEMINSTPVSNTST).

Belongs to the BamB family. As to quaternary structure, part of the Bam complex.

It is found in the cell outer membrane. Part of the outer membrane protein assembly complex, which is involved in assembly and insertion of beta-barrel proteins into the outer membrane. This is Outer membrane protein assembly factor BamB from Francisella salina.